The chain runs to 121 residues: Large ribosomal subunit protein uL14c (121 aa).

This sequence belongs to the universal ribosomal protein uL14 family. As to quaternary structure, part of the 50S ribosomal subunit.

The protein localises to the plastid. It localises to the chloroplast. Its function is as follows. Binds to 23S rRNA. The sequence is that of Large ribosomal subunit protein uL14c from Oedogonium cardiacum (Filamentous green alga).